The primary structure comprises 215 residues: uncharacterized protein (215 aa).

Residues S114, D162, and H194 each act as charge relay system in the active site.

This sequence belongs to the AB hydrolase superfamily. AB hydrolase 2 family.

This is an uncharacterized protein from Rickettsia felis (strain ATCC VR-1525 / URRWXCal2) (Rickettsia azadi).